Consider the following 310-residue polypeptide: Methionyl-tRNA formyltransferase (310 aa).

A (6S)-5,6,7,8-tetrahydrofolate-binding site is contributed by 111–114 (SLLP).

Belongs to the Fmt family.

The enzyme catalyses L-methionyl-tRNA(fMet) + (6R)-10-formyltetrahydrofolate = N-formyl-L-methionyl-tRNA(fMet) + (6S)-5,6,7,8-tetrahydrofolate + H(+). Its function is as follows. Attaches a formyl group to the free amino group of methionyl-tRNA(fMet). The formyl group appears to play a dual role in the initiator identity of N-formylmethionyl-tRNA by promoting its recognition by IF2 and preventing the misappropriation of this tRNA by the elongation apparatus. This Rhodopseudomonas palustris (strain BisB18) protein is Methionyl-tRNA formyltransferase.